A 776-amino-acid polypeptide reads, in one-letter code: Glutathione biosynthesis bifunctional protein GshAB (776 aa).

Residues 1 to 354 (MIKLDMTILD…QLADENENNI (354 aa)) form a glutamate--cysteine ligase region. The region spanning 521-775 (KLVLAENNIR…IGDKILDFLF (255 aa)) is the ATP-grasp domain. ATP is bound at residue 548–606 (SLFKDKQIVVKPKSTNYGWGISIFKNKFTTEDYQEALNIAFSYDSSVIIEEFIPGDEFR). Positions 728, 745, and 747 each coordinate Mg(2+). Residues Asp728, Glu745, and Asn747 each contribute to the Mn(2+) site.

In the N-terminal section; belongs to the glutamate--cysteine ligase type 1 family. Type 2 subfamily. As to quaternary structure, monomer. The cofactor is Mg(2+). Requires Mn(2+) as cofactor.

It catalyses the reaction L-cysteine + L-glutamate + ATP = gamma-L-glutamyl-L-cysteine + ADP + phosphate + H(+). The catalysed reaction is gamma-L-glutamyl-L-cysteine + glycine + ATP = glutathione + ADP + phosphate + H(+). The protein operates within sulfur metabolism; glutathione biosynthesis; glutathione from L-cysteine and L-glutamate: step 1/2. It functions in the pathway sulfur metabolism; glutathione biosynthesis; glutathione from L-cysteine and L-glutamate: step 2/2. Functionally, synthesizes glutathione from L-glutamate and L-cysteine via gamma-L-glutamyl-L-cysteine. This is Glutathione biosynthesis bifunctional protein GshAB from Listeria welshimeri serovar 6b (strain ATCC 35897 / DSM 20650 / CCUG 15529 / CIP 8149 / NCTC 11857 / SLCC 5334 / V8).